Here is a 189-residue protein sequence, read N- to C-terminus: Small ribosomal subunit protein uS4 (189 aa).

In terms of domain architecture, S4 RNA-binding spans 107 to 178; that stretch reads RRLQTQVFKL…AGRVKRKNQG (72 aa). The tract at residues 160–189 is disordered; sequence HNSPYGGGRAGRVKRKNQGKGGEEGAEEEE.

The protein belongs to the universal ribosomal protein uS4 family. In terms of assembly, component of the small ribosomal subunit. Mature ribosomes consist of a small (40S) and a large (60S) subunit. The 40S subunit contains about 32 different proteins and 1 molecule of RNA (18S). The 60S subunit contains 45 different proteins and 3 molecules of RNA (25S, 5.8S and 5S).

It localises to the cytoplasm. Component of the ribosome, a large ribonucleoprotein complex responsible for the synthesis of proteins in the cell. The small ribosomal subunit (SSU) binds messenger RNAs (mRNAs) and translates the encoded message by selecting cognate aminoacyl-transfer RNA (tRNA) molecules. The large subunit (LSU) contains the ribosomal catalytic site termed the peptidyl transferase center (PTC), which catalyzes the formation of peptide bonds, thereby polymerizing the amino acids delivered by tRNAs into a polypeptide chain. The nascent polypeptides leave the ribosome through a tunnel in the LSU and interact with protein factors that function in enzymatic processing, targeting, and the membrane insertion of nascent chains at the exit of the ribosomal tunnel. RPS9B is involved in nucleolar processing of pre-18S ribosomal RNA and ribosome assembly. The sequence is that of Small ribosomal subunit protein uS4 (RPS9B) from Candida albicans (strain SC5314 / ATCC MYA-2876) (Yeast).